The sequence spans 833 residues: Leucine--tRNA ligase (833 aa).

The 'HIGH' region signature appears at 41-52 (PYPSGAGLHVGH). The 'KMSKS' region motif lies at 610–614 (KMSKS). Lys613 lines the ATP pocket.

Belongs to the class-I aminoacyl-tRNA synthetase family.

It localises to the cytoplasm. The enzyme catalyses tRNA(Leu) + L-leucine + ATP = L-leucyl-tRNA(Leu) + AMP + diphosphate. In Streptococcus pyogenes serotype M1, this protein is Leucine--tRNA ligase.